A 347-amino-acid chain; its full sequence is UPF0284 protein M1627_0030 (347 aa).

It belongs to the UPF0284 family.

The sequence is that of UPF0284 protein M1627_0030 from Saccharolobus islandicus (strain M.16.27) (Sulfolobus islandicus).